We begin with the raw amino-acid sequence, 576 residues long: Quinone-reactive Ni/Fe-hydrogenase large chain (576 aa).

4 residues coordinate Ni(2+): Cys62, Cys65, Cys547, and Cys550.

Belongs to the [NiFe]/[NiFeSe] hydrogenase large subunit family. Heterodimer of a large and a small subunit. Ni(2+) serves as cofactor.

The protein localises to the cell membrane. It catalyses the reaction H2 + a menaquinone = a menaquinol. This enzyme recycles the H(2) produced by nitrogenase to increase the production of ATP and to protect nitrogenase against inhibition or damage by O(2) under carbon- or phosphate-limited conditions. The polypeptide is Quinone-reactive Ni/Fe-hydrogenase large chain (hydB) (Wolinella succinogenes (strain ATCC 29543 / DSM 1740 / CCUG 13145 / JCM 31913 / LMG 7466 / NCTC 11488 / FDC 602W) (Vibrio succinogenes)).